The primary structure comprises 23 residues: Protein male-specific 40 (23 aa).

As to expression, during early embryogenesis expression is initially detected at the early cleavage stages in the nucleus of two discrete cells. Subsequently, expression is abundant in the cytoplasm of the newly formed pole cells. Male-specific expression during the third larval instar.

The protein resides in the cytoplasm. It localises to the nucleus. This chain is Protein male-specific 40, found in Drosophila melanogaster (Fruit fly).